Reading from the N-terminus, the 101-residue chain is NAD(P)H-quinone oxidoreductase subunit 4L (101 aa).

Helical transmembrane passes span Leu3 to Thr23, Val30 to Asn50, and Ile64 to Ile84.

This sequence belongs to the complex I subunit 4L family. As to quaternary structure, NDH-1 can be composed of about 15 different subunits; different subcomplexes with different compositions have been identified which probably have different functions.

The protein resides in the cellular thylakoid membrane. It catalyses the reaction a plastoquinone + NADH + (n+1) H(+)(in) = a plastoquinol + NAD(+) + n H(+)(out). The catalysed reaction is a plastoquinone + NADPH + (n+1) H(+)(in) = a plastoquinol + NADP(+) + n H(+)(out). Its function is as follows. NDH-1 shuttles electrons from an unknown electron donor, via FMN and iron-sulfur (Fe-S) centers, to quinones in the respiratory and/or the photosynthetic chain. The immediate electron acceptor for the enzyme in this species is believed to be plastoquinone. Couples the redox reaction to proton translocation, and thus conserves the redox energy in a proton gradient. Cyanobacterial NDH-1 also plays a role in inorganic carbon-concentration. The polypeptide is NAD(P)H-quinone oxidoreductase subunit 4L (Leptolyngbya boryana (Plectonema boryanum)).